Here is a 544-residue protein sequence, read N- to C-terminus: Methionine--tRNA ligase (544 aa).

The 'HIGH' region signature appears at 10–20 (PYANGSLHLGH). Residues Cys141, Cys144, Cys153, and Cys156 each coordinate Zn(2+). A 'KMSKS' region motif is present at residues 329 to 333 (KLSTS). Thr332 lines the ATP pocket.

It belongs to the class-I aminoacyl-tRNA synthetase family. MetG type 1 subfamily. Monomer. The cofactor is Zn(2+).

The protein resides in the cytoplasm. It catalyses the reaction tRNA(Met) + L-methionine + ATP = L-methionyl-tRNA(Met) + AMP + diphosphate. In terms of biological role, is required not only for elongation of protein synthesis but also for the initiation of all mRNA translation through initiator tRNA(fMet) aminoacylation. This is Methionine--tRNA ligase from Bacillus cereus (strain G9842).